The following is a 519-amino-acid chain: ATP synthase subunit alpha (519 aa).

174–181 (GDRQTGKT) is a binding site for ATP.

This sequence belongs to the ATPase alpha/beta chains family. F-type ATPases have 2 components, CF(1) - the catalytic core - and CF(0) - the membrane proton channel. CF(1) has five subunits: alpha(3), beta(3), gamma(1), delta(1), epsilon(1). CF(0) has three main subunits: a(1), b(2) and c(9-12). The alpha and beta chains form an alternating ring which encloses part of the gamma chain. CF(1) is attached to CF(0) by a central stalk formed by the gamma and epsilon chains, while a peripheral stalk is formed by the delta and b chains.

The protein resides in the cell inner membrane. The enzyme catalyses ATP + H2O + 4 H(+)(in) = ADP + phosphate + 5 H(+)(out). Functionally, produces ATP from ADP in the presence of a proton gradient across the membrane. The alpha chain is a regulatory subunit. This is ATP synthase subunit alpha from Acidovorax ebreus (strain TPSY) (Diaphorobacter sp. (strain TPSY)).